The chain runs to 349 residues: 5-deoxyribose 1-phosphate isomerase (349 aa).

Residues 49–51 (RGA), Arg-92, and Gln-199 each bind substrate. Asp-240 acts as the Proton donor in catalysis. Residue 250–251 (NK) coordinates substrate.

The protein belongs to the EIF-2B alpha/beta/delta subunits family. DrdI subfamily.

It catalyses the reaction 5-deoxy-alpha-D-ribose 1-phosphate = 5-deoxy-D-ribulose 1-phosphate. The protein operates within carbohydrate degradation. Functionally, catalyzes the isomerization of 5-deoxy-alpha-D-ribose 1-phosphate to 5-deoxy-D-ribulose 1-phosphate, as part of a 5-deoxyribose salvage pathway that recycles this toxic radical SAM enzyme by-product to mainstream metabolites. The chain is 5-deoxyribose 1-phosphate isomerase from Clostridium botulinum (strain Loch Maree / Type A3).